Reading from the N-terminus, the 156-residue chain is Small ribosomal subunit protein uS7 (156 aa).

It belongs to the universal ribosomal protein uS7 family. Part of the 30S ribosomal subunit. Contacts proteins S9 and S11.

One of the primary rRNA binding proteins, it binds directly to 16S rRNA where it nucleates assembly of the head domain of the 30S subunit. Is located at the subunit interface close to the decoding center, probably blocks exit of the E-site tRNA. This is Small ribosomal subunit protein uS7 from Clostridium tetani (strain Massachusetts / E88).